A 247-amino-acid polypeptide reads, in one-letter code: DNA polymerase sliding clamp (247 aa).

It belongs to the PCNA family. In terms of assembly, homotrimer. The subunits circularize to form a toroid; DNA passes through its center. Replication factor C (RFC) is required to load the toroid on the DNA.

In terms of biological role, sliding clamp subunit that acts as a moving platform for DNA processing. Responsible for tethering the catalytic subunit of DNA polymerase and other proteins to DNA during high-speed replication. The protein is DNA polymerase sliding clamp of Haloarcula marismortui (strain ATCC 43049 / DSM 3752 / JCM 8966 / VKM B-1809) (Halobacterium marismortui).